We begin with the raw amino-acid sequence, 488 residues long: 3-octaprenyl-4-hydroxybenzoate carboxy-lyase (488 aa).

Residue N172 coordinates Mn(2+). Residues 175-177 (IYR), 189-191 (RWL), and 194-195 (RG) contribute to the prenylated FMN site. Residue E238 participates in Mn(2+) binding. D287 serves as the catalytic Proton donor.

It belongs to the UbiD family. Homohexamer. Requires prenylated FMN as cofactor. The cofactor is Mn(2+).

The protein resides in the cell membrane. The enzyme catalyses a 4-hydroxy-3-(all-trans-polyprenyl)benzoate + H(+) = a 2-(all-trans-polyprenyl)phenol + CO2. It participates in cofactor biosynthesis; ubiquinone biosynthesis. Functionally, catalyzes the decarboxylation of 3-octaprenyl-4-hydroxy benzoate to 2-octaprenylphenol, an intermediate step in ubiquinone biosynthesis. The protein is 3-octaprenyl-4-hydroxybenzoate carboxy-lyase of Stutzerimonas stutzeri (strain A1501) (Pseudomonas stutzeri).